We begin with the raw amino-acid sequence, 125 residues long: Small ribosomal subunit protein uS12 (125 aa).

The interval 9–28 (RSERSKLKKKTKSPALKQCP) is disordered. A 3-methylthioaspartic acid modification is found at D89. The tract at residues 104-125 (AQGVKDRKQGRSKYGTKRPKKA) is disordered. Residues 113–125 (GRSKYGTKRPKKA) are compositionally biased toward basic residues.

The protein belongs to the universal ribosomal protein uS12 family. As to quaternary structure, part of the 30S ribosomal subunit. Contacts proteins S8 and S17. May interact with IF1 in the 30S initiation complex.

Functionally, with S4 and S5 plays an important role in translational accuracy. In terms of biological role, interacts with and stabilizes bases of the 16S rRNA that are involved in tRNA selection in the A site and with the mRNA backbone. Located at the interface of the 30S and 50S subunits, it traverses the body of the 30S subunit contacting proteins on the other side and probably holding the rRNA structure together. The combined cluster of proteins S8, S12 and S17 appears to hold together the shoulder and platform of the 30S subunit. In Rippkaea orientalis (strain PCC 8801 / RF-1) (Cyanothece sp. (strain PCC 8801)), this protein is Small ribosomal subunit protein uS12.